We begin with the raw amino-acid sequence, 65 residues long: UPF0337 protein gbs1203 (65 aa).

The span at 1–12 (MSEEKFDAKVDK) shows a compositional bias: basic and acidic residues. A disordered region spans residues 1–29 (MSEEKFDAKVDKVSGSVKESVGKLTGDKE).

This sequence belongs to the UPF0337 (CsbD) family.

The chain is UPF0337 protein gbs1203 from Streptococcus agalactiae serotype III (strain NEM316).